Here is a 499-residue protein sequence, read N- to C-terminus: UTP--glucose-1-phosphate uridylyltransferase (499 aa).

S2 is subject to N-acetylserine. S17 carries the phosphoserine modification. T19 is modified (phosphothreonine). A phosphoserine mark is found at S21 and S79. UTP-binding positions include 109–112 (LNGG), K123, Q186, and G215. 111–112 (GG) is a binding site for substrate. K123 is a binding site for Mg(2+). Substrate contacts are provided by residues H216 and 244 to 246 (NGD). D246 is a binding site for UTP. A Mg(2+)-binding site is contributed by D246. R369 carries the omega-N-methylarginine modification. K388 contributes to the UTP binding site. Residue K388 is part of the active site. Residues 448-499 (HLTITGNVFLGKDVTLRGTVIIVCSDGHKIDIPNGSILENVVVTGNLQILEH) are oligomerization.

The protein belongs to the UDPGP type 1 family. As to quaternary structure, homooctamer.

It carries out the reaction alpha-D-glucose 1-phosphate + UTP + H(+) = UDP-alpha-D-glucose + diphosphate. Its function is as follows. Plays a central role as a glucosyl donor in cellular metabolic pathways. The polypeptide is UTP--glucose-1-phosphate uridylyltransferase (Saccharomyces cerevisiae (strain ATCC 204508 / S288c) (Baker's yeast)).